Consider the following 89-residue polypeptide: UPF0297 protein lp_2275 (89 aa).

It belongs to the UPF0297 family.

This chain is UPF0297 protein lp_2275, found in Lactiplantibacillus plantarum (strain ATCC BAA-793 / NCIMB 8826 / WCFS1) (Lactobacillus plantarum).